Reading from the N-terminus, the 665-residue chain is Target of rapamycin complex 2 subunit sin1 (665 aa).

Position 62 is a phosphoserine (Ser-62). 2 stretches are compositionally biased toward polar residues: residues 65–83 and 100–109; these read IVANDTVSNVRKPSDTKQV and YATSDLSESS. The tract at residues 65-112 is disordered; sequence IVANDTVSNVRKPSDTKQVNGAGGQVNHSRAEDSDYATSDLSESSDVG. Ser-133 carries the phosphoserine modification. A CRIM domain is found at 255-392; it reads TSALRALLEH…ATPAQIKENQ (138 aa). Residues 395–433 form a disordered region; sequence YPFKSKHPTSIPEANNKTHIRHTSSTSSQSQKQAQDVKD. Phosphoserine occurs at positions 404, 490, 502, and 530. The tract at residues 517-537 is disordered; sequence RDKKGSTQQLPTSSPQNSVYG. The span at 522 to 536 shows a compositional bias: polar residues; sequence STQQLPTSSPQNSVY. In terms of domain architecture, SIN1-type PH spans 558 to 659; sequence TYQEFLVWKR…IVSRIRALMN (102 aa).

This sequence belongs to the SIN1 family. In terms of assembly, the target of rapamycin complex 2 (TORC2) is composed of at least bit61, pop3/wat1, sin1, ste20 and tor1. Interacts with the sty1 MAP kinase. Phosphorylated; under environmental stress. Either Ser-61 or Ser-62 and Ser-298, Ser-299 or Ser-301 are phosphorylated as well.

Its function is as follows. Component of the mechanistic target of rapamycin complex 2 (mTORC2), which regulates multiple cellular processes to control cell growth in response to environmental signals. In response to signals, TORC2 phosphorylates AGC protein kinase family members, such as gad8. TORC2 is required for cell survival under various stress conditions. TORC2 positively controls G1 cell-cycle arrest, sexual development and amino acid uptake. Positively regulates amino acid uptake through the control of expression of amino acid permeases. Within the mTORC2 complex, sin1 acts as a substrate adapter which recognizes and binds AGC protein kinase family members for phosphorylation by tor1. The protein is Target of rapamycin complex 2 subunit sin1 of Schizosaccharomyces pombe (strain 972 / ATCC 24843) (Fission yeast).